The sequence spans 101 residues: MIGKEVTLQDIVLELNELQPEVQPVDLFCEEELPSEQQETEEELPERTAYKVVTPCGCCKVKLRIFVNATQFAIRTFQNLLFEELQLLCPECRGNCKHGGS.

Positions 1 to 44 (MIGKEVTLQDIVLELNELQPEVQPVDLFCEEELPSEQQETEEEL) are E7 terminal domain. The LXCXE motif; interaction with host RB1 and TMEM173/STING signature appears at 27 to 31 (LFCEE). A zinc finger lies at 56 to 92 (CGCCKVKLRIFVNATQFAIRTFQNLLFEELQLLCPEC). The short motif at 74 to 82 (IRTFQNLLF) is the Nuclear export signal element.

Belongs to the papillomaviridae E7 protein family. As to quaternary structure, homodimer. Homooligomer. Interacts with host RB1; this interaction induces dissociation of RB1-E2F1 complex thereby disrupting RB1 activity. Interacts with host EP300; this interaction represses EP300 transcriptional activity. Interacts with protein E2; this interaction inhibits E7 oncogenic activity. Interacts with host TMEM173/STING; this interaction impairs the ability of TMEM173/STING to sense cytosolic DNA and promote the production of type I interferon (IFN-alpha and IFN-beta). Highly phosphorylated.

Its subcellular location is the host cytoplasm. The protein resides in the host nucleus. Plays a role in viral genome replication by driving entry of quiescent cells into the cell cycle. Stimulation of progression from G1 to S phase allows the virus to efficiently use the cellular DNA replicating machinery to achieve viral genome replication. E7 protein has both transforming and trans-activating activities. Induces the disassembly of the E2F1 transcription factor from RB1, with subsequent transcriptional activation of E2F1-regulated S-phase genes. Interferes with host histone deacetylation mediated by HDAC1 and HDAC2, leading to transcription activation. Also plays a role in the inhibition of both antiviral and antiproliferative functions of host interferon alpha. Interaction with host TMEM173/STING impairs the ability of TMEM173/STING to sense cytosolic DNA and promote the production of type I interferon (IFN-alpha and IFN-beta). This Homo sapiens (Human) protein is Protein E7.